A 98-amino-acid polypeptide reads, in one-letter code: Beta-2-microglobulin (98 aa).

An Ig-like C1-type domain is found at 4–92 (PKVQVYSRFP…HETLKEPQVY (89 aa)). Cys-24 and Cys-79 are disulfide-bonded.

It belongs to the beta-2-microglobulin family. As to quaternary structure, heterodimer of an alpha chain and a beta chain. Beta-2-microglobulin is the beta-chain of major histocompatibility complex class I molecules.

It localises to the secreted. In terms of biological role, component of the class I major histocompatibility complex (MHC). Involved in the presentation of peptide antigens to the immune system. The protein is Beta-2-microglobulin (B2M) of Meleagris gallopavo (Wild turkey).